The primary structure comprises 109 residues: Parvalbumin, thymic (109 aa).

Ala2 bears the N-acetylalanine mark. 2 EF-hand domains span residues 39-74 (KTPDQIKKVFGILDQDKSGFIEEEELQLFLKNFSSS) and 78-109 (LTSAETKAFLAAGDTDGDGKIGVEEFQSLVKA). The Ca(2+) site is built by Asp52, Asp54, Ser56, Glu63, Asp91, Asp93, Asp95, Lys97, and Glu102.

It belongs to the parvalbumin family.

Functionally, appears to promote immune maturation in bone marrow cells in culture. Binds two calcium ions. This chain is Parvalbumin, thymic, found in Gallus gallus (Chicken).